Here is a 580-residue protein sequence, read N- to C-terminus: Probable inactive 1-aminocyclopropane-1-carboxylate synthase-like protein 2 (580 aa).

The tract at residues 1–43 (MSENRNEGSSQAAKANSDTQTPSHFKVTHPRLRDQLKKKSSKK) is disordered. Positions 7-23 (EGSSQAAKANSDTQTPS) are enriched in polar residues. Lysine 417 is subject to N6-(pyridoxal phosphate)lysine.

This sequence belongs to the class-I pyridoxal-phosphate-dependent aminotransferase family.

The sequence is that of Probable inactive 1-aminocyclopropane-1-carboxylate synthase-like protein 2 (Accsl) from Mus musculus (Mouse).